Here is a 434-residue protein sequence, read N- to C-terminus: Gamma-enolase (434 aa).

2 residues coordinate substrate: His-158 and Glu-167. The active-site Proton donor is the Glu-210. Asp-245, Glu-293, and Asp-318 together coordinate Mg(2+). Glu-293 and Asp-318 together coordinate substrate. Lys-343 serves as the catalytic Proton acceptor. Substrate is bound by residues Ser-370 to Ser-373 and Lys-394.

It belongs to the enolase family. Homodimer. Mg(2+) is required as a cofactor. As to expression, expressed in the brain and, to much less but significant extents, in the pituitary and adrenal glands.

It is found in the cytoplasm. The catalysed reaction is (2R)-2-phosphoglycerate = phosphoenolpyruvate + H2O. Its pathway is carbohydrate degradation; glycolysis; pyruvate from D-glyceraldehyde 3-phosphate: step 4/5. The chain is Gamma-enolase (ENO2) from Gallus gallus (Chicken).